A 326-amino-acid chain; its full sequence is MSTFEKINKVSVVIPVYNEEESLPQLLERTIKSCKQLEQEYELILVDDGSSDNSAKMLEEAANIEDNHVIAIILNRNYGQHSAIMAGFNQADGDLVITLDADLQNPPEEIPRLVATAEEGYDVVGTRRRNRQDSWFRKTASKMINAMITKATGRSMGDYGCMLRAYRRHIIDAMLQCHERSTFIPILANTFARRTIEIEVAHAEREYGDSKYSFLKLINLMYDLLTCLTTAPLRLLSVVGSVIAVAGFLLAVLLIVLRLIFGAIWAADGVFTLFAILFMFIGAQFVAMGLLGEYIGRIYNDVRARPRYFIQKVVGVKKPNKNQEED.

Transmembrane regions (helical) follow at residues 236-256 (LSVV…LLIV) and 270-290 (VFTL…AMGL).

This sequence belongs to the glycosyltransferase 2 family.

Its subcellular location is the cell inner membrane. It catalyses the reaction UDP-4-deoxy-4-formamido-beta-L-arabinose + di-trans,octa-cis-undecaprenyl phosphate = 4-deoxy-4-formamido-alpha-L-arabinopyranosyl di-trans,octa-cis-undecaprenyl phosphate + UDP. It functions in the pathway glycolipid biosynthesis; 4-amino-4-deoxy-alpha-L-arabinose undecaprenyl phosphate biosynthesis; 4-amino-4-deoxy-alpha-L-arabinose undecaprenyl phosphate from UDP-4-deoxy-4-formamido-beta-L-arabinose and undecaprenyl phosphate: step 1/2. It participates in bacterial outer membrane biogenesis; lipopolysaccharide biosynthesis. In terms of biological role, catalyzes the transfer of 4-deoxy-4-formamido-L-arabinose from UDP to undecaprenyl phosphate. The modified arabinose is attached to lipid A and is required for resistance to polymyxin and cationic antimicrobial peptides. This is Undecaprenyl-phosphate 4-deoxy-4-formamido-L-arabinose transferase from Proteus mirabilis (strain HI4320).